Here is a 2215-residue protein sequence, read N- to C-terminus: Unconventional myosin-VIIa (2215 aa).

A Myosin motor domain is found at 65–741; sequence HGVEDMIRLG…HDMLLEVERD (677 aa). 158 to 165 serves as a coordination point for ATP; it reads GESGAGKT. Positions 632–639 are actin-binding; sequence FVRCIKPN. 5 IQ domains span residues 745–765, 768–788, 791–811, 814–834, and 837–857; these read TDRV…SNFL, KSAA…KNYE, RLGF…KQYR, RQRI…KAFR, and LWAV…RLHR. An SAH region spans residues 858-935; it reads RLRVEYQRRL…LEQMEKARHE (78 aa). One can recognise a MyTH4 1 domain in the interval 1017 to 1253; the sequence is YTRRPLKQPL…PSWLELQATK (237 aa). Residues 1258-1602 enclose the FERM 1 domain; that stretch reads IMLPVTFMDG…LVVTFLEGLR (345 aa). Threonine 1563 carries the post-translational modification Phosphothreonine. A Phosphoserine modification is found at serine 1569. Phosphothreonine is present on threonine 1571. In terms of domain architecture, SH3 spans 1603-1672; it reads KRSKYVVALQ…PTDCVYVMPT (70 aa). The MyTH4 2 domain occupies 1747-1896; it reads HTREPLKQAL…PHLVEVEAIQ (150 aa). An FERM 2 domain is found at 1902–2205; that stretch reads IFHKVYFPDD…SYISQMLTAM (304 aa).

Belongs to the TRAFAC class myosin-kinesin ATPase superfamily. Myosin family. Might homodimerize in a two headed molecule through the formation of a coiled-coil rod. Identified in a complex with USH1C and USH1G. Interacts with MYRIP. Interacts with RPE65. Interacts with CIB2. May interact with CALM. Interacts with WHRN. Interacts with PLEKHB1 (via PH domain). Interacts with PCDH15. Interacts with TWF2. Interacts with USH1G. Interacts with MYH9. Interacts (via MyTH4-FERM domains) with cytoplasmic regions of ADGRV1 and USH2A. Interacts with PDZD7 (via MyTH4-FERM domains). Interacts with CALML4. Detected in mechanosensory stereocilia of cochlea hair cells (at protein level). Expressed in the retina, cochlea, kidney and liver.

The protein localises to the cytoplasm. The protein resides in the cell cortex. Its subcellular location is the cytoskeleton. It localises to the synapse. Functionally, myosins are actin-based motor molecules with ATPase activity. Unconventional myosins serve in intracellular movements. Their highly divergent tails bind to membranous compartments, which are then moved relative to actin filaments. In the retina, plays an important role in the renewal of the outer photoreceptor disks. Plays an important role in the distribution and migration of retinal pigment epithelial (RPE) melanosomes and phagosomes, and in the regulation of opsin transport in retinal photoreceptors. Mediates intracellular transport of RPE65 in the retina pigment epithelium. In the inner ear, plays an important role in differentiation, morphogenesis and organization of cochlear hair cell bundles. Motor protein that is a part of the functional network formed by USH1C, USH1G, CDH23 and MYO7A that mediates mechanotransduction in cochlear hair cells. Required for normal hearing. Involved in hair-cell vesicle trafficking of aminoglycosides, which are known to induce ototoxicity. This is Unconventional myosin-VIIa (Myo7a) from Mus musculus (Mouse).